Here is a 388-residue protein sequence, read N- to C-terminus: Chorismate synthase (388 aa).

NADP(+)-binding residues include Arg39 and Arg45. FMN-binding positions include 130–132 (RSS), 251–252 (NA), Gly296, 311–315 (KPIPT), and Arg337.

This sequence belongs to the chorismate synthase family. Homotetramer. It depends on FMNH2 as a cofactor.

The enzyme catalyses 5-O-(1-carboxyvinyl)-3-phosphoshikimate = chorismate + phosphate. It functions in the pathway metabolic intermediate biosynthesis; chorismate biosynthesis; chorismate from D-erythrose 4-phosphate and phosphoenolpyruvate: step 7/7. Its function is as follows. Catalyzes the anti-1,4-elimination of the C-3 phosphate and the C-6 proR hydrogen from 5-enolpyruvylshikimate-3-phosphate (EPSP) to yield chorismate, which is the branch point compound that serves as the starting substrate for the three terminal pathways of aromatic amino acid biosynthesis. This reaction introduces a second double bond into the aromatic ring system. The chain is Chorismate synthase from Streptococcus pyogenes serotype M6 (strain ATCC BAA-946 / MGAS10394).